We begin with the raw amino-acid sequence, 308 residues long: Putative transcription elongation factor S-II (308 aa).

A TFIIS N-terminal domain is found at 5-84 (EETQSLCKQV…KDWKNVVDGK (80 aa)). The interval 82 to 126 (DGKSKSQDDGGAPPAKKHRKESVEEAKPEKKKIEAPYKRPEPSSR) is disordered. Positions 102–125 (ESVEEAKPEKKKIEAPYKRPEPSS) are enriched in basic and acidic residues. The TFIIS central domain maps to 148–263 (TRLKSAQLLL…EHQMSVQQGT (116 aa)). The TFIIS-type zinc finger occupies 266–306 (DMFKCGKCGKKNCTYTQLQTRSSDEPMTTFVFCLECGNRWK). Residues C270, C273, C298, and C301 each coordinate Zn(2+).

Belongs to the TFS-II family.

It localises to the nucleus. Its function is as follows. Necessary for efficient RNA polymerase II transcription elongation past template-encoded arresting sites. The arresting sites in DNA have the property of trapping a certain fraction of elongating RNA polymerases that pass through, resulting in locked ternary complexes. Cleavage of the nascent transcript by S-II allows the resumption of elongation from the new 3'-terminus. In Caenorhabditis elegans, this protein is Putative transcription elongation factor S-II.